A 193-amino-acid chain; its full sequence is Holliday junction branch migration complex subunit RuvA (193 aa).

The interval 1–63 (MIGKLTGTVT…ENINKLYGFE (63 aa)) is domain I. The domain II stretch occupies residues 64 to 148 (CRKSQEVARM…GIASSTNVHI (85 aa)). Residues 149 to 150 (AS) are flexible linker. The domain III stretch occupies residues 150–193 (SEAVSALVKLGFQHKPSHKVVMEIMTKRPAIEIAELITLALKML).

Belongs to the RuvA family. As to quaternary structure, homotetramer. Forms an RuvA(8)-RuvB(12)-Holliday junction (HJ) complex. HJ DNA is sandwiched between 2 RuvA tetramers; dsDNA enters through RuvA and exits via RuvB. An RuvB hexamer assembles on each DNA strand where it exits the tetramer. Each RuvB hexamer is contacted by two RuvA subunits (via domain III) on 2 adjacent RuvB subunits; this complex drives branch migration. In the full resolvosome a probable DNA-RuvA(4)-RuvB(12)-RuvC(2) complex forms which resolves the HJ.

It is found in the cytoplasm. Functionally, the RuvA-RuvB-RuvC complex processes Holliday junction (HJ) DNA during genetic recombination and DNA repair, while the RuvA-RuvB complex plays an important role in the rescue of blocked DNA replication forks via replication fork reversal (RFR). RuvA specifically binds to HJ cruciform DNA, conferring on it an open structure. The RuvB hexamer acts as an ATP-dependent pump, pulling dsDNA into and through the RuvAB complex. HJ branch migration allows RuvC to scan DNA until it finds its consensus sequence, where it cleaves and resolves the cruciform DNA. In Neorickettsia sennetsu (strain ATCC VR-367 / Miyayama) (Ehrlichia sennetsu), this protein is Holliday junction branch migration complex subunit RuvA.